Consider the following 422-residue polypeptide: Steroid hormone receptor ERR1 (422 aa).

The tract at residues 1–67 is disordered; sequence MSSQVVGIEP…GAGPGEQGGG (67 aa). Phosphoserine is present on residues Ser-19 and Ser-22. Gly residues predominate over residues 58–67; it reads GAGPGEQGGG. A DNA-binding region (nuclear receptor) is located at residues 76–151; sequence KRLCLVCGDV…VGMLKEGVRL (76 aa). 2 consecutive NR C4-type zinc fingers follow at residues 79 to 99 and 115 to 134; these read CLVC…CEAC and CPAS…CQAC. N6-acetyllysine; by PCAF/KAT2B occurs at positions 129, 138, 160, and 162. Glycyl lysine isopeptide (Lys-Gly) (interchain with G-Cter in SUMO2) cross-links involve residues Lys-189 and Lys-402. In terms of domain architecture, NR LBD spans 192–420; that stretch reads PVNALVSHLL…KLFLEMLEAM (229 aa).

This sequence belongs to the nuclear hormone receptor family. NR3 subfamily. Binds DNA as a monomer or a homodimer. Interacts (via the AF2 domain) with coactivator PPARGC1A (via the L3 motif); the interaction greatly enhances transcriptional activity of genes involved in energy metabolism. Interacts with PIAS4; the interaction enhances sumoylation. Interacts with MAPK15; promotes re-localization of ESRRA to the cytoplasm through a XPO1-dependent mechanism then inhibits ESRRA transcriptional activity. Post-translationally, phosphorylation on Ser-19 enhances sumoylation on Lys-14 increasing repression of transcriptional activity. In terms of processing, sumoylated with SUMO2. Main site is Lys-14 which is enhanced by phosphorylation on Ser-19, cofactor activation, and by interaction with PIAS4. Sumoylation enhances repression of transcriptional activity, but has no effect on subcellular location nor on DNA binding. Reversibly acetylated. Acetylation by PCAF/KAT2 at Lys-129, Lys-138, Lys-160 and Lys-162 and PCAF/KAT2 decreases transcriptional activity probably by inhibiting DNA-binding activity; deacetylation involves SIRT1 and HDAC8 and increases DNA-binding.

Its subcellular location is the nucleus. It is found in the cytoplasm. Binds to an ERR-alpha response element (ERRE) containing a single consensus half-site, 5'-TNAAGGTCA-3'. Can bind to the medium-chain acyl coenzyme A dehydrogenase (MCAD) response element NRRE-1 and may act as an important regulator of MCAD promoter. May function as a modulator of the estrogen signaling pathway in the uterus. Induces the expression of PERM1 in the skeletal muscle. The polypeptide is Steroid hormone receptor ERR1 (ESRRA) (Canis lupus familiaris (Dog)).